We begin with the raw amino-acid sequence, 962 residues long: CRACD-like protein (962 aa).

Disordered regions lie at residues Gly38 to Gly102, Asn131 to Gly174, and Pro212 to Val871. A compositionally biased stretch (polar residues) spans Pro46–Asn61. The residue at position 92 (Ser92) is a Phosphoserine. Over residues Ala224–Ser244 the composition is skewed to basic residues. Over residues Ser245–Thr256 the composition is skewed to polar residues. Over residues Glu266–Pro278 the composition is skewed to basic and acidic residues. Pro residues-rich tracts occupy residues Glu292 to Gly303 and Pro354 to Gly365. Low complexity predominate over residues Pro407–Pro425. Basic and acidic residues-rich tracts occupy residues Asp429–Glu440 and Glu459–Gly480. Ser490 is subject to Phosphoserine. A compositionally biased stretch (low complexity) spans Ala503–Pro521. Composition is skewed to basic and acidic residues over residues Ala536–Glu546, Ala555–Gly570, Lys631–Asp642, and Tyr709–Cys728. The segment covering Pro753–Arg764 has biased composition (pro residues). Composition is skewed to basic and acidic residues over residues Pro784–Glu806 and Gln844–Glu869.

This is CRACD-like protein from Homo sapiens (Human).